Here is a 383-residue protein sequence, read N- to C-terminus: S-adenosylmethionine synthase (383 aa).

His-15 lines the ATP pocket. Residue Asp-17 participates in Mg(2+) binding. Glu-43 serves as a coordination point for K(+). Residues Glu-56 and Gln-99 each coordinate L-methionine. The interval 99-109 is flexible loop; the sequence is QSPDINQGVDR. ATP-binding positions include 164 to 166, 230 to 231, Asp-239, 245 to 246, Ala-262, and Lys-266; these read DAK, RF, and RK. Asp-239 provides a ligand contact to L-methionine. Lys-270 serves as a coordination point for L-methionine.

The protein belongs to the AdoMet synthase family. Homotetramer; dimer of dimers. Mg(2+) serves as cofactor. Requires K(+) as cofactor.

The protein resides in the cytoplasm. It catalyses the reaction L-methionine + ATP + H2O = S-adenosyl-L-methionine + phosphate + diphosphate. The protein operates within amino-acid biosynthesis; S-adenosyl-L-methionine biosynthesis; S-adenosyl-L-methionine from L-methionine: step 1/1. In terms of biological role, catalyzes the formation of S-adenosylmethionine (AdoMet) from methionine and ATP. The overall synthetic reaction is composed of two sequential steps, AdoMet formation and the subsequent tripolyphosphate hydrolysis which occurs prior to release of AdoMet from the enzyme. This Shewanella sp. (strain W3-18-1) protein is S-adenosylmethionine synthase.